The primary structure comprises 192 residues: uncharacterized protein (192 aa).

Positions 29 to 160 constitute a Nudix hydrolase domain; sequence QRQAAVLVPI…PLDIHRRGND (132 aa). Residues 67-89 carry the Nudix box motif; that stretch reads GAVDNTDATLIAAALREAQEEVA. 2 residues coordinate Mg(2+): Glu83 and Glu87.

This sequence belongs to the Nudix hydrolase family. PCD1 subfamily. Mn(2+) is required as a cofactor. It depends on Mg(2+) as a cofactor.

In terms of biological role, probably mediates the hydrolysis of some nucleoside diphosphate derivatives. This is an uncharacterized protein from Klebsiella pneumoniae (strain 342).